The following is a 163-amino-acid chain: NADH-quinone oxidoreductase subunit I (163 aa).

2 consecutive 4Fe-4S ferredoxin-type domains span residues 53–83 (LRRY…IEAG) and 94–123 (TRYD…EGPN). Cysteine 63, cysteine 66, cysteine 69, cysteine 73, cysteine 103, cysteine 106, cysteine 109, and cysteine 113 together coordinate [4Fe-4S] cluster.

It belongs to the complex I 23 kDa subunit family. NDH-1 is composed of 14 different subunits. Subunits NuoA, H, J, K, L, M, N constitute the membrane sector of the complex. [4Fe-4S] cluster serves as cofactor.

The protein resides in the cell inner membrane. The catalysed reaction is a quinone + NADH + 5 H(+)(in) = a quinol + NAD(+) + 4 H(+)(out). In terms of biological role, NDH-1 shuttles electrons from NADH, via FMN and iron-sulfur (Fe-S) centers, to quinones in the respiratory chain. The immediate electron acceptor for the enzyme in this species is believed to be ubiquinone. Couples the redox reaction to proton translocation (for every two electrons transferred, four hydrogen ions are translocated across the cytoplasmic membrane), and thus conserves the redox energy in a proton gradient. The chain is NADH-quinone oxidoreductase subunit I from Parvibaculum lavamentivorans (strain DS-1 / DSM 13023 / NCIMB 13966).